The primary structure comprises 252 residues: Small ribosomal subunit protein uS3 (252 aa).

The region spanning isoleucine 39–lysine 111 is the KH type-2 domain. Positions serine 226–asparagine 252 are disordered.

It belongs to the universal ribosomal protein uS3 family. Part of the 30S ribosomal subunit. Forms a tight complex with proteins S10 and S14.

Binds the lower part of the 30S subunit head. Binds mRNA in the 70S ribosome, positioning it for translation. The polypeptide is Small ribosomal subunit protein uS3 (Aster yellows witches'-broom phytoplasma (strain AYWB)).